A 176-amino-acid chain; its full sequence is Protein OPG163 (176 aa).

Positions 1–14 are cleaved as a signal peptide; it reads MDAAFVITPMGVLT.

This sequence belongs to the orthopoxvirus OPG163 family.

It is found in the host endosome. Functionally, mildly affects the expression of MHC class II molecules on the surface of host antigen presenting cells (APCs). The chain is Protein OPG163 (OPG163) from Vaccinia virus (strain Western Reserve) (VACV).